A 434-amino-acid chain; its full sequence is Enolase (434 aa).

Glutamine 163 is a binding site for (2R)-2-phosphoglycerate. Glutamate 205 acts as the Proton donor in catalysis. The Mg(2+) site is built by aspartate 242, glutamate 291, and aspartate 318. Positions 343, 372, 373, and 394 each coordinate (2R)-2-phosphoglycerate. The active-site Proton acceptor is lysine 343.

This sequence belongs to the enolase family. Requires Mg(2+) as cofactor.

The protein localises to the cytoplasm. The protein resides in the secreted. It is found in the cell surface. It catalyses the reaction (2R)-2-phosphoglycerate = phosphoenolpyruvate + H2O. The protein operates within carbohydrate degradation; glycolysis; pyruvate from D-glyceraldehyde 3-phosphate: step 4/5. In terms of biological role, catalyzes the reversible conversion of 2-phosphoglycerate (2-PG) into phosphoenolpyruvate (PEP). It is essential for the degradation of carbohydrates via glycolysis. The polypeptide is Enolase (Streptococcus intermedius).